Consider the following 319-residue polypeptide: 4-diphosphocytidyl-2-C-methyl-D-erythritol kinase (319 aa).

The active site involves K21. 106-116 is a binding site for ATP; that stretch reads PIGAGLAGGSS. The active site involves D148.

This sequence belongs to the GHMP kinase family. IspE subfamily.

The catalysed reaction is 4-CDP-2-C-methyl-D-erythritol + ATP = 4-CDP-2-C-methyl-D-erythritol 2-phosphate + ADP + H(+). The protein operates within isoprenoid biosynthesis; isopentenyl diphosphate biosynthesis via DXP pathway; isopentenyl diphosphate from 1-deoxy-D-xylulose 5-phosphate: step 3/6. Catalyzes the phosphorylation of the position 2 hydroxy group of 4-diphosphocytidyl-2C-methyl-D-erythritol. This Prochlorococcus marinus (strain SARG / CCMP1375 / SS120) protein is 4-diphosphocytidyl-2-C-methyl-D-erythritol kinase.